A 149-amino-acid chain; its full sequence is Nucleoside diphosphate kinase (149 aa).

6 residues coordinate ATP: Lys-9, Phe-57, Arg-85, Thr-91, Arg-102, and Asn-112. The Pros-phosphohistidine intermediate role is filled by His-115.

The protein belongs to the NDK family. Mg(2+) serves as cofactor.

The protein localises to the cytoplasm. It carries out the reaction a 2'-deoxyribonucleoside 5'-diphosphate + ATP = a 2'-deoxyribonucleoside 5'-triphosphate + ADP. The enzyme catalyses a ribonucleoside 5'-diphosphate + ATP = a ribonucleoside 5'-triphosphate + ADP. Its function is as follows. Major role in the synthesis of nucleoside triphosphates other than ATP. The ATP gamma phosphate is transferred to the NDP beta phosphate via a ping-pong mechanism, using a phosphorylated active-site intermediate. In Methanoculleus marisnigri (strain ATCC 35101 / DSM 1498 / JR1), this protein is Nucleoside diphosphate kinase.